We begin with the raw amino-acid sequence, 69 residues long: Conotoxin Eb6.14 (69 aa).

An N-terminal signal peptide occupies residues 1-17 (VLIIAVLFLTACQLTTA). A propeptide spanning residues 18-41 (ETYSRGRQKHRARRSTDKNSKWTR) is cleaved from the precursor. Disulfide bonds link Cys43-Cys57, Cys50-Cys61, and Cys56-Cys68.

Belongs to the conotoxin O1 superfamily. As to expression, expressed by the venom duct.

It localises to the secreted. This Conus ebraeus (Hebrew cone) protein is Conotoxin Eb6.14 (E1).